We begin with the raw amino-acid sequence, 369 residues long: Anhydro-N-acetylmuramic acid kinase (369 aa).

ATP is bound at residue 12-19 (GTSLDGVD).

This sequence belongs to the anhydro-N-acetylmuramic acid kinase family.

The enzyme catalyses 1,6-anhydro-N-acetyl-beta-muramate + ATP + H2O = N-acetyl-D-muramate 6-phosphate + ADP + H(+). It participates in amino-sugar metabolism; 1,6-anhydro-N-acetylmuramate degradation. Its pathway is cell wall biogenesis; peptidoglycan recycling. In terms of biological role, catalyzes the specific phosphorylation of 1,6-anhydro-N-acetylmuramic acid (anhMurNAc) with the simultaneous cleavage of the 1,6-anhydro ring, generating MurNAc-6-P. Is required for the utilization of anhMurNAc either imported from the medium or derived from its own cell wall murein, and thus plays a role in cell wall recycling. This Escherichia coli O7:K1 (strain IAI39 / ExPEC) protein is Anhydro-N-acetylmuramic acid kinase.